The chain runs to 226 residues: Ribonuclease HII (226 aa).

Residues 24-216 (QRLCGVDEAG…VRKVLERGMV (193 aa)) enclose the RNase H type-2 domain. The a divalent metal cation site is built by Asp-30, Glu-31, and Asp-125.

This sequence belongs to the RNase HII family. Mn(2+) is required as a cofactor. It depends on Mg(2+) as a cofactor.

The protein resides in the cytoplasm. It catalyses the reaction Endonucleolytic cleavage to 5'-phosphomonoester.. In terms of biological role, endonuclease that specifically degrades the RNA of RNA-DNA hybrids. This is Ribonuclease HII from Cupriavidus metallidurans (strain ATCC 43123 / DSM 2839 / NBRC 102507 / CH34) (Ralstonia metallidurans).